Consider the following 647-residue polypeptide: Calmodulin-binding protein 60 B (647 aa).

Polar residues predominate over residues 1-10; the sequence is MMDSGNNNMN. Residues 1 to 26 form a disordered region; it reads MMDSGNNNMNRAKRNLDGNDDDQPER. The interval 8-85 is calmodulin-binding; sequence NMNRAKRNLD…TGSSGSSPKR (78 aa). Positions 12 to 19 match the Nuclear localization signal motif; it reads AKRNLDGN. The DNA-binding stretch occupies residues 155–278; that stretch reads EDDEDWTQEE…AFHKKLTAEG (124 aa).

It belongs to the plant ACBP60 protein family. Interacts with calmodulin (CaM). In terms of tissue distribution, expressed in leaves, stems, flowers, developing seeds and root.

Its subcellular location is the nucleus. Transcription activator that binds DNA in a sequence-specific manner, likely 5'-GAAATTTTGG-3', to promote the expression of target genes. This chain is Calmodulin-binding protein 60 B, found in Arabidopsis thaliana (Mouse-ear cress).